A 174-amino-acid polypeptide reads, in one-letter code: MAEINKPAFKKPDLKKMTPKGERKANRRGAARLAAVQALYQMDIGGAGINETFAEFESFWIGNEVEGEQYLPAEAAFFRDIVAGVVREQKQIDPLIDDLLARGWPLARIDAILRAVMRAGAYELEHRKDIPARVVVSEYVDVAHAFVEKDETGMVNAVLDQIARRFRAEEFSKG.

The protein belongs to the NusB family.

Its function is as follows. Involved in transcription antitermination. Required for transcription of ribosomal RNA (rRNA) genes. Binds specifically to the boxA antiterminator sequence of the ribosomal RNA (rrn) operons. This Rhodopseudomonas palustris (strain TIE-1) protein is Transcription antitermination protein NusB.